The primary structure comprises 313 residues: uncharacterized protein (313 aa).

This sequence to M.jannaschii MJ0977 C-terminal region.

This is an uncharacterized protein from Methanocaldococcus jannaschii (strain ATCC 43067 / DSM 2661 / JAL-1 / JCM 10045 / NBRC 100440) (Methanococcus jannaschii).